The primary structure comprises 316 residues: UDP-N-acetylglucosamine transporter yea4 (316 aa).

At 1 to 3 the chain is on the cytoplasmic side; the sequence is MIA. Residues 4-24 form a helical membrane-spanning segment; sequence SALSFIFGGCCSNAYALEALV. Residues 25 to 31 lie on the Lumenal side of the membrane; the sequence is REFPSSG. The helical transmembrane segment at 32-52 threads the bilayer; that stretch reads ILITFSQFILITIEGLIYFLL. Topologically, residues 53 to 67 are cytoplasmic; the sequence is NDVQSLKHPKVPRKR. Residues 68–88 form a helical membrane-spanning segment; it reads WFVVVVMFFAINVLNNVALGF. Topologically, residues 89–120 are lumenal; sequence DISVPVHIILRSSGPLTTMAVGRILAGKRYSS. The chain crosses the membrane as a helical span at residues 121–141; that stretch reads LQIGSVFILTIGVIIATLGNA. Residues 142-153 lie on the Cytoplasmic side of the membrane; sequence KDLHLHVESMTR. A helical membrane pass occupies residues 154–174; the sequence is FGIGFTILVITQILGAIMGLV. Residues 175 to 187 are Lumenal-facing; the sequence is LENTYRIYGSDWR. The helical transmembrane segment at 188–208 threads the bilayer; the sequence is ESLFYTHALSLPFFLFLLRPI. Over 209 to 214 the chain is Cytoplasmic; sequence RSQWND. Residues 215 to 235 traverse the membrane as a helical segment; it reads LFAIHTKGFLNLPSGVWYLCF. Residues 236–274 lie on the Lumenal side of the membrane; the sequence is NTLAQYFCVRGVNALGAETSALTVSVVLNVRKFVSLCLS. A helical membrane pass occupies residues 275–295; the sequence is LILFENEMGPAVKFGALLVFG. At 296 to 316 the chain is on the cytoplasmic side; that stretch reads SSAVYASARSKPKTNGLKKND.

It belongs to the nucleotide-sugar transporter family. SLC35B subfamily.

The protein resides in the endoplasmic reticulum. The protein localises to the endoplasmic reticulum membrane. In terms of biological role, sugar transporter that specifically mediates the transport of UDP-N-acetylglucosamine (UDP-GlcNAc) and is required for cell wall chitin synthesis. The protein is UDP-N-acetylglucosamine transporter yea4 (yea4) of Schizosaccharomyces pombe (strain 972 / ATCC 24843) (Fission yeast).